The sequence spans 769 residues: Zinc finger protein 585B (769 aa).

The span at 1 to 12 (MPASWTSPQKSS) shows a compositional bias: polar residues. A disordered region spans residues 1-23 (MPASWTSPQKSSALAPDDHGSSY). The KRAB domain occupies 27–97 (VSFRDVVINF…QGERPRHSCP (71 aa)). C2H2-type zinc fingers lie at residues 158-180 (YVCIECGRAFVQKPEFITHQKAH), 186-208 (YKCNECGKSVFQVSSLFRHQRIH), 214-236 (YQCSECGKGFPYNSDLSIHEKIH), 242-264 (HECTDCGKAFTQRSTLKMHQKIH), 270-292 (YICIECGQAFIQKTQLIAHRRIH), 298-320 (YECNNCGKSFISKSQLEVHQRIH), 354-376 (SICTECGKAFTYRSELIIHQRIH), 382-404 (YACSDCGKAFTQKSTLTVHQRIH), 410-432 (YVCMKCGLAFIRKAHLVTHQIIH), 438-460 (YKCGHCGKLFTSKSQLHVHKRIH), 466-488 (YVCNKCGKAFTNRSDLITHQKTH), 494-516 (YICSKCGKAFTQRSDLITHQRIH), 522-544 (YECNTCGKAFTQKSNLNIHQKIH), 550-572 (YECHECGKAFNQKSILIVHQKIH), 578-600 (YVCTECGRAFIRKSNFITHQRIH), 606-628 (YECSDCGKSFTSKSQLLVHQPLH), 634-656 (YVCAECGKAFSGRSNLSKHQKTH), 662-684 (YICSECGKTFRQKSELITHHRIH), 690-712 (YECSDCGKSFTKKSQLQVHQRIH), 718-740 (YVCAECGKAFSNRSNLNKHQTTH), and 746-768 (YKCGICGKGFVQKSVFSVHQGSH).

The protein belongs to the krueppel C2H2-type zinc-finger protein family.

The protein resides in the nucleus. Functionally, may be involved in transcriptional regulation. In Pongo abelii (Sumatran orangutan), this protein is Zinc finger protein 585B (ZNF585B).